The sequence spans 82 residues: Small ribosomal subunit protein bS16 (82 aa).

It belongs to the bacterial ribosomal protein bS16 family.

In Synechococcus elongatus (strain ATCC 33912 / PCC 7942 / FACHB-805) (Anacystis nidulans R2), this protein is Small ribosomal subunit protein bS16.